The chain runs to 485 residues: MRHIFSLLSIVCLMVKHGACLTLHQRDVPAVVSLDIKRSIVSDPVVRDRVRRKRDKTIGQTLDNAETLYFCNVTLGTPGQALRLVLDTGSSDLWCNAANSTLCSDSNDSCNISGSYDPSSSSTYAYVSSDFNISYADGTGAVGDYATDILHIGGSTLRNLQFGIGYSSTSSEGVLGIGYPSNEVQVGQYGKDTYPNLPRAMVDQGLINSNAYSLWLNDLESNTGSILFGGVNTGKYLGELQTLPIQKVNGRYSEFVIALTGVAFDSESHHKTYSSDALPAAVLLDSGSSLTYLPDSIVENIYRDLNVAYEPSSGVGYLPCKLAGNNINITYTFSSPNITVMIDELLLDAGDLRFRDGARACIFGIVPAGDSTAVLGDTFLRSAYVVYDIANNEISIANTNFNSTEDNILEIGVGPDSVPSATQVSHPVTSVVADGSGARIGAPTGASSTTVPSISSAGALSAGVARADKQYLAIALIAVWFVLGL.

The signal sequence occupies residues 1–20 (MRHIFSLLSIVCLMVKHGAC). The Peptidase A1 domain occupies 69-397 (YFCNVTLGTP…DIANNEISIA (329 aa)). A glycan (N-linked (GlcNAc...) asparagine) is linked at asparagine 72. Aspartate 87 is an active-site residue. 4 N-linked (GlcNAc...) asparagine glycosylation sites follow: asparagine 99, asparagine 107, asparagine 111, and asparagine 132. The active site involves aspartate 285. N-linked (GlcNAc...) asparagine glycans are attached at residues asparagine 328, asparagine 337, and asparagine 402. A lipid anchor (GPI-anchor amidated serine) is attached at serine 461. The propeptide at 462–485 (AGVARADKQYLAIALIAVWFVLGL) is removed in mature form.

This sequence belongs to the peptidase A1 family.

It localises to the cell membrane. Its function is as follows. Probable GPI-anchored aspartic-type endopeptidase which contributes to virulence. The chain is Probable aspartic-type endopeptidase opsB (opsB) from Aspergillus fumigatus (strain ATCC MYA-4609 / CBS 101355 / FGSC A1100 / Af293) (Neosartorya fumigata).